The following is a 236-amino-acid chain: 1-(5-phosphoribosyl)-5-[(5-phosphoribosylamino)methylideneamino] imidazole-4-carboxamide isomerase (236 aa).

Asp8 functions as the Proton acceptor in the catalytic mechanism. Asp127 acts as the Proton donor in catalysis.

The protein belongs to the HisA/HisF family.

It is found in the cytoplasm. The enzyme catalyses 1-(5-phospho-beta-D-ribosyl)-5-[(5-phospho-beta-D-ribosylamino)methylideneamino]imidazole-4-carboxamide = 5-[(5-phospho-1-deoxy-D-ribulos-1-ylimino)methylamino]-1-(5-phospho-beta-D-ribosyl)imidazole-4-carboxamide. It participates in amino-acid biosynthesis; L-histidine biosynthesis; L-histidine from 5-phospho-alpha-D-ribose 1-diphosphate: step 4/9. The sequence is that of 1-(5-phosphoribosyl)-5-[(5-phosphoribosylamino)methylideneamino] imidazole-4-carboxamide isomerase from Campylobacter concisus (strain 13826).